A 372-amino-acid polypeptide reads, in one-letter code: tRNA-specific 2-thiouridylase MnmA (372 aa).

ATP contacts are provided by residues 9–16 (GMSGGVDS) and Met35. Positions 95 to 97 (NPD) are interaction with target base in tRNA. Cys100 serves as the catalytic Nucleophile. The cysteines at positions 100 and 201 are disulfide-linked. Gly124 provides a ligand contact to ATP. The tract at residues 151-153 (KDQ) is interaction with tRNA. Cys201 (cysteine persulfide intermediate) is an active-site residue. The interaction with tRNA stretch occupies residues 317–318 (RY).

This sequence belongs to the MnmA/TRMU family.

The protein resides in the cytoplasm. The catalysed reaction is S-sulfanyl-L-cysteinyl-[protein] + uridine(34) in tRNA + AH2 + ATP = 2-thiouridine(34) in tRNA + L-cysteinyl-[protein] + A + AMP + diphosphate + H(+). Catalyzes the 2-thiolation of uridine at the wobble position (U34) of tRNA, leading to the formation of s(2)U34. The chain is tRNA-specific 2-thiouridylase MnmA from Herminiimonas arsenicoxydans.